We begin with the raw amino-acid sequence, 601 residues long: Elongation factor 4 (601 aa).

The tr-type G domain maps to 7-189 (SNIRNFSIVA…AIVHRLPPPQ (183 aa)). GTP contacts are provided by residues 19-24 (DHGKST) and 136-139 (NKVD).

This sequence belongs to the TRAFAC class translation factor GTPase superfamily. Classic translation factor GTPase family. LepA subfamily.

The protein localises to the cell inner membrane. It carries out the reaction GTP + H2O = GDP + phosphate + H(+). Required for accurate and efficient protein synthesis under certain stress conditions. May act as a fidelity factor of the translation reaction, by catalyzing a one-codon backward translocation of tRNAs on improperly translocated ribosomes. Back-translocation proceeds from a post-translocation (POST) complex to a pre-translocation (PRE) complex, thus giving elongation factor G a second chance to translocate the tRNAs correctly. Binds to ribosomes in a GTP-dependent manner. This chain is Elongation factor 4, found in Rhodopseudomonas palustris (strain BisB18).